An 806-amino-acid polypeptide reads, in one-letter code: Acetyl-CoA decarbonylase/synthase complex subunit alpha 1 (806 aa).

[4Fe-4S] cluster contacts are provided by cysteine 73, cysteine 76, cysteine 77, cysteine 79, cysteine 84, and cysteine 94. Histidine 117 contacts CO. [Ni-4Fe-4S] cluster-binding residues include histidine 250, cysteine 278, and cysteine 323. 2 consecutive 4Fe-4S ferredoxin-type domains span residues 407 to 436 and 445 to 475; these read DEQM…IPEA and YSYL…LSVI. Cysteine 417, cysteine 420, cysteine 423, cysteine 427, cysteine 455, cysteine 458, cysteine 461, and cysteine 465 together coordinate [4Fe-4S] cluster. [Ni-4Fe-4S] cluster-binding residues include cysteine 523, cysteine 552, and cysteine 587.

The protein belongs to the Ni-containing carbon monoxide dehydrogenase family. As to quaternary structure, heterotetramer of two alpha and two epsilon subunits. The ACDS complex is made up of alpha, epsilon, beta, gamma and delta subunits with a probable stoichiometry of (alpha(2)epsilon(2))(4)-beta(8)-(gamma(1)delta(1))(8). Requires [4Fe-4S] cluster as cofactor. It depends on [Ni-4Fe-4S] cluster as a cofactor.

The catalysed reaction is CO + 2 oxidized [2Fe-2S]-[ferredoxin] + H2O = 2 reduced [2Fe-2S]-[ferredoxin] + CO2 + 2 H(+). The protein operates within one-carbon metabolism; methanogenesis from acetate. Functionally, part of the ACDS complex that catalyzes the reversible cleavage of acetyl-CoA, allowing growth on acetate as sole source of carbon and energy. The alpha-epsilon subcomponent functions as a carbon monoxide dehydrogenase. The protein is Acetyl-CoA decarbonylase/synthase complex subunit alpha 1 of Methanosarcina thermophila.